Here is a 463-residue protein sequence, read N- to C-terminus: Asparagine--tRNA ligase (463 aa).

It belongs to the class-II aminoacyl-tRNA synthetase family. In terms of assembly, homodimer.

The protein resides in the cytoplasm. The enzyme catalyses tRNA(Asn) + L-asparagine + ATP = L-asparaginyl-tRNA(Asn) + AMP + diphosphate + H(+). This chain is Asparagine--tRNA ligase, found in Alkaliphilus oremlandii (strain OhILAs) (Clostridium oremlandii (strain OhILAs)).